The primary structure comprises 208 residues: dITP/XTP pyrophosphatase (208 aa).

11 to 16 is a binding site for substrate; that stretch reads SRNWKK. Aspartate 76 serves as the catalytic Proton acceptor. Position 76 (aspartate 76) interacts with Mg(2+). Substrate is bound by residues serine 77, 158–161, lysine 184, and 189–190; these read FGYD and HR.

It belongs to the HAM1 NTPase family. As to quaternary structure, homodimer. Requires Mg(2+) as cofactor.

It carries out the reaction XTP + H2O = XMP + diphosphate + H(+). The enzyme catalyses dITP + H2O = dIMP + diphosphate + H(+). It catalyses the reaction ITP + H2O = IMP + diphosphate + H(+). Pyrophosphatase that catalyzes the hydrolysis of nucleoside triphosphates to their monophosphate derivatives, with a high preference for the non-canonical purine nucleotides XTP (xanthosine triphosphate), dITP (deoxyinosine triphosphate) and ITP. Seems to function as a house-cleaning enzyme that removes non-canonical purine nucleotides from the nucleotide pool, thus preventing their incorporation into DNA/RNA and avoiding chromosomal lesions. The sequence is that of dITP/XTP pyrophosphatase from Mycobacterium leprae (strain TN).